A 448-amino-acid chain; its full sequence is UDP-N-acetylmuramoylalanine--D-glutamate ligase (448 aa).

Gly116–Thr122 contacts ATP.

This sequence belongs to the MurCDEF family.

It localises to the cytoplasm. It catalyses the reaction UDP-N-acetyl-alpha-D-muramoyl-L-alanine + D-glutamate + ATP = UDP-N-acetyl-alpha-D-muramoyl-L-alanyl-D-glutamate + ADP + phosphate + H(+). It functions in the pathway cell wall biogenesis; peptidoglycan biosynthesis. Cell wall formation. Catalyzes the addition of glutamate to the nucleotide precursor UDP-N-acetylmuramoyl-L-alanine (UMA). In Pseudomonas fluorescens (strain Pf0-1), this protein is UDP-N-acetylmuramoylalanine--D-glutamate ligase.